We begin with the raw amino-acid sequence, 601 residues long: Elongation factor 4 (601 aa).

Residues 6 to 188 (EHIRNFSIIA…EIVRKIPAPE (183 aa)) form the tr-type G domain. GTP-binding positions include 18–23 (DHGKST) and 135–138 (NKID).

Belongs to the TRAFAC class translation factor GTPase superfamily. Classic translation factor GTPase family. LepA subfamily.

The protein resides in the cell inner membrane. The catalysed reaction is GTP + H2O = GDP + phosphate + H(+). In terms of biological role, required for accurate and efficient protein synthesis under certain stress conditions. May act as a fidelity factor of the translation reaction, by catalyzing a one-codon backward translocation of tRNAs on improperly translocated ribosomes. Back-translocation proceeds from a post-translocation (POST) complex to a pre-translocation (PRE) complex, thus giving elongation factor G a second chance to translocate the tRNAs correctly. Binds to ribosomes in a GTP-dependent manner. This chain is Elongation factor 4, found in Hydrogenovibrio crunogenus (strain DSM 25203 / XCL-2) (Thiomicrospira crunogena).